Consider the following 692-residue polypeptide: MTRTALVTTALPYANGPLHLGHLVGYIQADIWVRARRMSGGKAWFVCADDTHGTPIMLAAEKAGVTPETFIANIQASHERDFAAFGVAFDHYDSTNSAANKALTEQFYLKLEAAGHISRRSVAQFYDPAKGMFLPDRYVKGICPNCGSPDQYGDNCEVCGATYAPTDLKEPRSVISGATPEMRDSEHFFFEVGHFDAFLREWLAGDVALPGVKAKLGEWLNAEGGLRAWDISRDAPYFGFQIPGQPGKYFYVWLDAPIGYLSSFQTLCGRIGEDFEAHLRAGTSTELHHFIGKDIVNFHGLFWPAVLHGTGHRAPTRLHVNGYLTVDGAKMSKSRGTFVMARTFLDAGLEPEALRYYYAAKSGGGVDDLDLNLGDFIARVNADLVGKFVNLASRCAGFISKRFDGQLAAQLPDAAQYQRFVDGLAPIREAYERNDPAAAIRLTMTLADEANRYIDDVKPWVIAKQEGADAQLQAVCSQGLNLFRVLVTALKPVLPATAAQAEAFLAAPVNDWTELAQPLLGHRITDYTPLFTRIDPKKIDAMIDASKDTLQPAAAAAPAAKPAAPAPAPAPAKDEAKSADAPAYIGIDDFAKLDLRIGKVLVCEFVEGSDKLLRFELDAGELGKRQIFSGIRASYGEPEKLVGRSVVFIANLAPRKMRFGLSEGMILSAGFDGGALALLDADSGAQPGMPVR.

The short motif at 12–22 (PYANGPLHLGH) is the 'HIGH' region element. Zn(2+) is bound by residues Cys143, Cys146, Cys156, and Cys159. The short motif at 330 to 334 (KMSKS) is the 'KMSKS' region element. An ATP-binding site is contributed by Lys333. Over residues 554–563 (AAAAPAAKPA) the composition is skewed to low complexity. The tract at residues 554-575 (AAAAPAAKPAAPAPAPAPAKDE) is disordered. One can recognise a tRNA-binding domain in the interval 589 to 692 (DFAKLDLRIG…SGAQPGMPVR (104 aa)).

Belongs to the class-I aminoacyl-tRNA synthetase family. MetG type 1 subfamily. Homodimer. Zn(2+) serves as cofactor.

Its subcellular location is the cytoplasm. It carries out the reaction tRNA(Met) + L-methionine + ATP = L-methionyl-tRNA(Met) + AMP + diphosphate. Is required not only for elongation of protein synthesis but also for the initiation of all mRNA translation through initiator tRNA(fMet) aminoacylation. The sequence is that of Methionine--tRNA ligase from Stenotrophomonas maltophilia (strain K279a).